A 346-amino-acid chain; its full sequence is fMet-Leu-Phe receptor (346 aa).

Residues Asn-1 and Asn-7 are each glycosylated (N-linked (GlcNAc...) asparagine). Over 1-24 (NSSLPTNISGGTPAVSAGYLFLDI) the chain is Extracellular. A helical transmembrane segment spans residues 25-47 (ITYLVFAVTFVLGVLGNGLVIWV). At 48-58 (AGFRMRHTVTT) the chain is on the cytoplasmic side. The chain crosses the membrane as a helical span at residues 59-80 (ISYLNLAVADFCFTSTLPFLMV). At 81-97 (VKVMRGHWPFGWFLCKF) the chain is on the extracellular side. Cys-95 and Cys-173 are disulfide-bonded. Residues 98 to 118 (IFTIVDINLFGSVFLIALIAL) form a helical membrane-spanning segment. Over 119–137 (DRCVCVLHPVWTQNHRTVS) the chain is Cytoplasmic. The chain crosses the membrane as a helical span at residues 138–159 (LAKKVIIGPWVMALLLTLPVII). Residues 160-202 (RVTTVPGKTGTVACTFDFSPWTNDPVEKLKVTIAMLTVRGIIR) are Extracellular-facing. A helical transmembrane segment spans residues 203 to 223 (FIIGFSVPMSIVAVSYGLIAT). Topologically, residues 224–239 (KIHKQGLIKSSRPLRV) are cytoplasmic. Residues 240–263 (LSFVVAAFFLCWSPYQVVAFIATV) form a helical membrane-spanning segment. Topologically, residues 264 to 282 (RLRNILQGLSKELRIAVDA) are extracellular. A helical membrane pass occupies residues 283–302 (TSALAFFNSCLNPMLYVFMG). The Cytoplasmic portion of the chain corresponds to 303 to 346 (QDFRERLIHSLPTSLERALTEDSAQTSDTATNSTLPSAEVPLQA). The disordered stretch occupies residues 321–346 (LTEDSAQTSDTATNSTLPSAEVPLQA). Polar residues predominate over residues 324–338 (DSAQTSDTATNSTLP).

It belongs to the G-protein coupled receptor 1 family. Post-translationally, phosphorylated; which is necessary for desensitization.

The protein resides in the cell membrane. Its function is as follows. High affinity receptor for N-formyl-methionyl peptides (fMLP), which are powerful neutrophil chemotactic factors. Binding of fMLP to the receptor stimulates intracellular calcium mobilization and superoxide anion release. This response is mediated via a G-protein that activates a phosphatidylinositol-calcium second messenger system. Receptor for TAFA4, mediates its effects on chemoattracting macrophages, promoting phagocytosis and increasing ROS release. Receptor for cathepsin CTSG, leading to increased phagocyte chemotaxis. This is fMet-Leu-Phe receptor (FPR1) from Macaca mulatta (Rhesus macaque).